Reading from the N-terminus, the 249-residue chain is Small ribosomal subunit protein uS2 (249 aa).

The protein belongs to the universal ribosomal protein uS2 family.

This is Small ribosomal subunit protein uS2 from Polynucleobacter necessarius subsp. necessarius (strain STIR1).